A 38-amino-acid chain; its full sequence is Mu/omega-theraphotoxin-Mb1a (38 aa).

Cystine bridges form between Cys7–Cys21, Cys14–Cys26, and Cys20–Cys33. A Threonine amide modification is found at Thr38.

It belongs to the neurotoxin 10 (Hwtx-1) family. 28 (Jztx-11) subfamily. In terms of tissue distribution, expressed by the venom gland.

It localises to the secreted. In terms of biological role, paralytic toxin that inhibits insect voltage-gated sodium (Nav) and calcium (Cav) channels in P.americana (American cockroach) dorsal unpaired median (DUM) neurons, and inhibits the B.germanica (German cockroach) Nav channel (BgNaV1). Also shows a delay in fast inactivation when tested on BgNaV1. May act as a gating-modifier toxin on Nav and as a pore blocker on Cav. In vivo, reversibly paralyzes both L.cuprina (Australian sheep blowfly) and M.domestica (housefly), but does not affect larvae of H.armigera (cotton bollworms). This chain is Mu/omega-theraphotoxin-Mb1a, found in Monocentropus balfouri (Socotra Island blue baboon tarantula).